A 219-amino-acid polypeptide reads, in one-letter code: Elongation factor Ts (219 aa).

Positions 82–85 (TDFV) are involved in Mg(2+) ion dislocation from EF-Tu.

This sequence belongs to the EF-Ts family.

It is found in the cytoplasm. Functionally, associates with the EF-Tu.GDP complex and induces the exchange of GDP to GTP. It remains bound to the aminoacyl-tRNA.EF-Tu.GTP complex up to the GTP hydrolysis stage on the ribosome. This is Elongation factor Ts from Anaeromyxobacter sp. (strain Fw109-5).